The following is a 313-amino-acid chain: ADP,ATP carrier protein (313 aa).

Solcar repeat units lie at residues 11 to 104 (PPFV…FKKM), 116 to 208 (KWMA…IKPV), and 216 to 302 (NNFL…LQVL). A run of 5 helical transmembrane segments spans residues 13 to 40 (FVAD…IKLL), 81 to 105 (TANV…KKMF), 114 to 134 (YWKW…TSLL), 184 to 205 (FGPS…YDSI), and 219 to 239 (LASF…SYPL). ADP contacts are provided by Arg-86 and Arg-98. Arg-243 is a binding site for ADP. An important for transport activity region spans residues 243–248 (RRRMMM). Positions 243-248 (RRRMMM) match the Nucleotide carrier signature motif motif. Residues 279-299 (AGANILRGVAGAGVLSIYDQL) form a helical membrane-spanning segment.

Belongs to the mitochondrial carrier (TC 2.A.29) family. Monomer.

The protein resides in the mitochondrion inner membrane. It catalyses the reaction ADP(in) + ATP(out) = ADP(out) + ATP(in). With respect to regulation, the matrix-open state (m-state) is inhibited by the membrane-permeable bongkrekic acid (BKA). The cytoplasmic-open state (c-state) is inhibited by the membrane-impermeable toxic inhibitor carboxyatractyloside (CATR). Functionally, ADP:ATP antiporter that mediates import of ADP into the mitochondrial matrix for ATP synthesis, and export of ATP out to fuel the cell. Cycles between the cytoplasmic-open state (c-state) and the matrix-open state (m-state): operates by the alternating access mechanism with a single substrate-binding site intermittently exposed to either the cytosolic (c-state) or matrix (m-state) side of the inner mitochondrial membrane. This chain is ADP,ATP carrier protein (aac), found in Neurospora crassa (strain ATCC 24698 / 74-OR23-1A / CBS 708.71 / DSM 1257 / FGSC 987).